Reading from the N-terminus, the 451-residue chain is Probable beta-1,4-xylosyltransferase GT43E (451 aa).

Over 1–88 the chain is Cytoplasmic; that stretch reads MVSSRRNTGG…SKSRGLSCKR (88 aa). The helical; Signal-anchor for type II membrane protein transmembrane segment at 89–109 threads the bilayer; the sequence is LAFHLFVCFMVGIFIGFMPFF. Residues 110-451 are Lumenal-facing; sequence SVDVSQKIVS…KNLDAVIPVT (342 aa). Residues N260 and N366 are each glycosylated (N-linked (GlcNAc...) asparagine).

Belongs to the glycosyltransferase 43 family.

The protein localises to the golgi apparatus membrane. Its function is as follows. Probable beta-1,4-xylosyltransferase involved in xylan biosynthesis in cell walls. The sequence is that of Probable beta-1,4-xylosyltransferase GT43E from Oryza sativa subsp. japonica (Rice).